Consider the following 1048-residue polypeptide: B3 domain-containing protein Os02g0598200 (1048 aa).

The tract at residues 1-345 (MDGAVRGQGC…QKERVASSDN (345 aa)) is disordered. Residues 16–25 (SFNKTKKKNR) are compositionally biased toward basic residues. Basic and acidic residues-rich tracts occupy residues 26–134 (NCSD…SDDM), 151–162 (KKNSRNDADEEK), 169–214 (CSDD…GDKK), 243–253 (KNMKSDGDSYK), 281–295 (AKER…MEMK), and 332–345 (LKRE…SSDN). A DNA-binding region (TF-B3 1) is located at residues 375 to 468 (AFAFFKFVRD…TFSVRVFGID (94 aa)). The tract at residues 505–528 (QYQDSEDIHDGPNVSGESPRSKEP) is disordered. The TF-B3 2 DNA-binding region spans 953 to 1048 (LQFCIPSTIQ…LAFQVYITRK (96 aa)).

Its subcellular location is the nucleus. The sequence is that of B3 domain-containing protein Os02g0598200 from Oryza sativa subsp. japonica (Rice).